Consider the following 87-residue polypeptide: U3-theraphotoxin-Cg1b (87 aa).

An N-terminal signal peptide occupies residues 1–23 (MRTLTLIAIVTCAALVIFHAAAA). The propeptide occupies 24 to 48 (EELEAQDVIQPEDIFTGVATLEEDR). 3 disulfide bridges follow: Cys52/Cys65, Cys56/Cys79, and Cys73/Cys84.

Belongs to the neurotoxin 12 (Hwtx-2) family. 03 (juruin) subfamily. Expressed by the venom gland.

The protein localises to the secreted. Probable ion channel inhibitor. The chain is U3-theraphotoxin-Cg1b from Chilobrachys guangxiensis (Chinese earth tiger tarantula).